The following is a 107-amino-acid chain: uncharacterized protein (107 aa).

A Glutaredoxin domain is found at 6–107 (KKVIEQILDN…QAQVETLLAA (102 aa)). Residue Lys-23 coordinates glutathione. Cys-31 contacts [2Fe-2S] cluster. Glutathione-binding positions include Arg-60 and 85 to 86 (AD).

This sequence belongs to the glutaredoxin family. Monothiol subfamily.

Its subcellular location is the plastid. The protein localises to the chloroplast. This is an uncharacterized protein from Porphyra purpurea (Red seaweed).